The sequence spans 294 residues: RNA exonuclease 4 (294 aa).

The span at 1-13 (MVLSSNWLSLQKS) shows a compositional bias: polar residues. The disordered stretch occupies residues 1–56 (MVLSSNWLSLQKSTDSDSVNKNKGGKKTKSNSKKRTVSVKKDKQYVDKKKKNGTGS). The segment covering 23 to 38 (KGGKKTKSNSKKRTVS) has biased composition (basic residues). The Exonuclease domain occupies 119–271 (YVSMDCEFVG…EDARATMLLY (153 aa)).

The protein belongs to the REXO4 family.

The protein resides in the nucleus. Its function is as follows. Exoribonuclease involved in ribosome biosynthesis. Involved in the processing of ITS1, the internal transcribed spacer localized between the 18S and 5.8S rRNAs. This is RNA exonuclease 4 (REX4) from Kluyveromyces lactis (strain ATCC 8585 / CBS 2359 / DSM 70799 / NBRC 1267 / NRRL Y-1140 / WM37) (Yeast).